Reading from the N-terminus, the 206-residue chain is MANDVTKDPTPKSDIVEDIYLWRRKKLAFSTLLVSTSTWILLSFYGFTTITIVSWIGIAVVSMIFLWGSLLRLLSKVEPELSGLEVSEEFVVETVRSCRMLMEEMVRWMFRVGAESEWFVFARTVLGFWILSRIGNLLDFHTCLFIGLVMGLTVPKLWEEYGDQIQKHLGSLKDKSKGAYNTTHEKILEMKNKLHHGTEEKVKKSE.

The 191-residue stretch at 16–206 (VEDIYLWRRK…GTEEKVKKSE (191 aa)) folds into the Reticulon domain. A run of 3 helical transmembrane segments spans residues 27–47 (LAFS…FYGF), 50–70 (ITIV…WGSL), and 134–154 (IGNL…GLTV).

The protein localises to the endoplasmic reticulum membrane. The polypeptide is Reticulon-like protein B13 (RTNLB13) (Arabidopsis thaliana (Mouse-ear cress)).